The following is a 143-amino-acid chain: Ribonuclease VapC33 (143 aa).

Residues Asp-5 and Asp-108 each coordinate Mg(2+).

This sequence belongs to the PINc/VapC protein family. The cofactor is Mg(2+).

Its function is as follows. Toxic component of a type II toxin-antitoxin (TA) system. An RNase. Its toxic effect is neutralized by coexpression with cognate antitoxin VapB33. The sequence is that of Ribonuclease VapC33 from Mycobacterium tuberculosis (strain CDC 1551 / Oshkosh).